An 84-amino-acid polypeptide reads, in one-letter code: Small ribosomal subunit protein bS20 (84 aa).

The interval 1-25 (MANIVSNEKTYRHTQKVRKENHAKM) is disordered.

It belongs to the bacterial ribosomal protein bS20 family.

In terms of biological role, binds directly to 16S ribosomal RNA. The sequence is that of Small ribosomal subunit protein bS20 from Ureaplasma parvum serovar 3 (strain ATCC 700970).